Here is a 1531-residue protein sequence, read N- to C-terminus: Protein turtle (1531 aa).

Over 1–858 the chain is Extracellular; it reads MGVCADLGSH…PARVKHKAIT (858 aa). Positions 19 to 44 are disordered; that stretch reads QHNTEKSKEQQQQSQPLEIPEQRASK. Ig-like C2-type domains follow at residues 132-243, 253-340, 344-436, 440-529, and 536-624; these read PEDA…KNGT, PRFS…ARVI, GAVI…AYLS, PAKV…GVMD, and PAFT…MAVT. Intrachain disulfides connect C150–C227, C275–C324, C366–C419, C462–C513, and C558–C611. Fibronectin type-III domains lie at 632–728 and 760–851; these read QPHA…TLED and PPRN…VPAR. The chain crosses the membrane as a helical span at residues 859 to 879; the sequence is AGVVGGILFFIVAIILSVCAV. Topologically, residues 880–1531 are cytoplasmic; the sequence is KICNKRKRRK…QAMQQMESVC (652 aa). Disordered regions lie at residues 1248–1269 and 1318–1395; these read EETR…VPLQ and NLNL…SYPR. Low complexity predominate over residues 1333-1349; sequence SPESRSSSSGFGSKNTS. The span at 1380 to 1389 shows a compositional bias: polar residues; it reads QQAQGQTPHG.

Belongs to the immunoglobulin superfamily. Turtle family. In terms of assembly, interacts with bdl. In terms of tissue distribution, exclusively expressed in the central nervous system.

The protein resides in the membrane. Its function is as follows. Essential protein that plays a role in the establishment of coordinated motor control. In the developing eye, involved in axonal targeting of the R7 photoreceptor. This is Protein turtle (tutl) from Drosophila melanogaster (Fruit fly).